The sequence spans 98 residues: Aspartyl/glutamyl-tRNA(Asn/Gln) amidotransferase subunit C (98 aa).

This sequence belongs to the GatC family. In terms of assembly, heterotrimer of A, B and C subunits.

The enzyme catalyses L-glutamyl-tRNA(Gln) + L-glutamine + ATP + H2O = L-glutaminyl-tRNA(Gln) + L-glutamate + ADP + phosphate + H(+). It catalyses the reaction L-aspartyl-tRNA(Asn) + L-glutamine + ATP + H2O = L-asparaginyl-tRNA(Asn) + L-glutamate + ADP + phosphate + 2 H(+). In terms of biological role, allows the formation of correctly charged Asn-tRNA(Asn) or Gln-tRNA(Gln) through the transamidation of misacylated Asp-tRNA(Asn) or Glu-tRNA(Gln) in organisms which lack either or both of asparaginyl-tRNA or glutaminyl-tRNA synthetases. The reaction takes place in the presence of glutamine and ATP through an activated phospho-Asp-tRNA(Asn) or phospho-Glu-tRNA(Gln). The chain is Aspartyl/glutamyl-tRNA(Asn/Gln) amidotransferase subunit C from Roseiflexus castenholzii (strain DSM 13941 / HLO8).